The following is a 157-amino-acid chain: Transcription elongation factor GreA (157 aa).

The stretch at 12-74 (LKKLEEELEY…TLEAMLKNAK (63 aa)) forms a coiled coil.

This sequence belongs to the GreA/GreB family.

Its function is as follows. Necessary for efficient RNA polymerase transcription elongation past template-encoded arresting sites. The arresting sites in DNA have the property of trapping a certain fraction of elongating RNA polymerases that pass through, resulting in locked ternary complexes. Cleavage of the nascent transcript by cleavage factors such as GreA or GreB allows the resumption of elongation from the new 3'terminus. GreA releases sequences of 2 to 3 nucleotides. This is Transcription elongation factor GreA from Caldanaerobacter subterraneus subsp. tengcongensis (strain DSM 15242 / JCM 11007 / NBRC 100824 / MB4) (Thermoanaerobacter tengcongensis).